The following is a 597-amino-acid chain: Elongation factor 4 (597 aa).

The tr-type G domain maps to 2–184 (KNIRNFSIIA…EIVHKIPAPE (183 aa)). Residues 14 to 19 (DHGKST) and 131 to 134 (NKID) contribute to the GTP site.

Belongs to the TRAFAC class translation factor GTPase superfamily. Classic translation factor GTPase family. LepA subfamily.

The protein localises to the cell inner membrane. It carries out the reaction GTP + H2O = GDP + phosphate + H(+). Its function is as follows. Required for accurate and efficient protein synthesis under certain stress conditions. May act as a fidelity factor of the translation reaction, by catalyzing a one-codon backward translocation of tRNAs on improperly translocated ribosomes. Back-translocation proceeds from a post-translocation (POST) complex to a pre-translocation (PRE) complex, thus giving elongation factor G a second chance to translocate the tRNAs correctly. Binds to ribosomes in a GTP-dependent manner. The polypeptide is Elongation factor 4 (Actinobacillus succinogenes (strain ATCC 55618 / DSM 22257 / CCUG 43843 / 130Z)).